The following is a 542-amino-acid chain: MSRRGSILHSRTQWLLLGLALLFSLVLFMYLLECAPQTDGNASLPGVVRENYGKEYYQALLQEQEEHYQTRATSLKRQIAQLKQELQDMSEKMRALQERKKLGANGVGYPGNREQAPSDLLEFLHSQIDRAEVSVGAKLPSEYGVVPFESFTLMKVFQLEMGLTRHPEEKPVRKDKRDELVEVIEAGVEVINNPDEDDAQEDEEGPLGEKLIFNENDFIEGYYRTERDKGTQYELFFKKADLMEYRHVTLFRPFGPLMKVKNELIDITRSVINIIVPLAERTEAFSQFMQNFRDVCIHQDKRIHLTVVYFGKEGLSKVKSILESVSSESDFHNYTLVSLDEEFNRGRGLNVGARAWDKGEVLMFFCDVDIYFSAEFLNSCRLNAEPGKKVFYPVVFSLYNPAIVYANQDVPPPVEQQLVHKKDSGFWRDFGFGMTCQYQSDFLSVGGFDMEVKGWGGEDVHLYRKYLHGDLIVIRTPVPGLFHLWHEKHCADELTPEQYRMCIQSKAMNEASHSHLGMMVFREEIEMHLRKQAYRTNSETAG.

Topologically, residues 1-13 (MSRRGSILHSRTQ) are cytoplasmic. Residues 14 to 34 (WLLLGLALLFSLVLFMYLLEC) traverse the membrane as a helical; Signal-anchor for type II membrane protein segment. Residues 35–542 (APQTDGNASL…AYRTNSETAG (508 aa)) lie on the Lumenal side of the membrane. Asparagine 41 is a glycosylation site (N-linked (GlcNAc...) asparagine). Residues 59-105 (ALLQEQEEHYQTRATSLKRQIAQLKQELQDMSEKMRALQERKKLGAN) are a coiled coil. Asparagine 333 carries N-linked (GlcNAc...) asparagine glycosylation. Positions 369 and 486 each coordinate a divalent metal cation.

The protein belongs to the chondroitin N-acetylgalactosaminyltransferase family.

It localises to the golgi apparatus. The protein localises to the golgi stack membrane. It carries out the reaction 3-O-(beta-D-GlcA-(1-&gt;3)-beta-D-Gal-(1-&gt;3)-beta-D-Gal-(1-&gt;4)-beta-D-Xyl)-L-seryl-[protein] + UDP-N-acetyl-alpha-D-galactosamine = 3-O-(beta-D-GalNAc-(1-&gt;4)-beta-D-GlcA-(1-&gt;3)-beta-D-Gal-(1-&gt;3)-beta-D-Gal-(1-&gt;4)-beta-D-Xyl)-L-seryl-[protein] + UDP + H(+). Transfers 1,4-N-acetylgalactosamine (GalNAc) from UDP-GalNAc to the non-reducing end of glucuronic acid (GlcUA). Required for addition of the first GalNAc to the core tetrasaccharide linker and for elongation of chondroitin chains. The polypeptide is Chondroitin sulfate N-acetylgalactosaminyltransferase 2 (Csgalnact2) (Mus musculus (Mouse)).